The sequence spans 112 residues: MKTPRPYLEHILQECEFLIERVKGISFEDFVKDPVLTRAFVRSLEIIGEAVKNLPKEFREKHSKVPWKEIAGMRDKLIHEYFGVNYRIIWETILKEIPELEKQVKEILQKEK.

Catalysis depends on residues Arg-74 and His-79. The RX(4)HXY motif motif lies at Arg-74–Tyr-81. Tyr-81 is modified (O-di-AMP-tyrosine).

The protein belongs to the HepT RNase toxin family. In terms of assembly, homodimer, probably forms a complex with cognate antitoxin TTE0751. Modified by cognate antitoxin TTE0751; probably at least 2 successive AMPylation events occur on Tyr-81.

Probable toxic component of a putative type VII toxin-antitoxin (TA) system, probably an RNase. Probably neutralized by cognate antitoxin TTE0751. Neutralization may be due to AMPylation by TTE0751. The protein is Putative RNase TTE0752 of Caldanaerobacter subterraneus subsp. tengcongensis (strain DSM 15242 / JCM 11007 / NBRC 100824 / MB4) (Thermoanaerobacter tengcongensis).